Consider the following 365-residue polypeptide: tRNA/tmRNA (uracil-C(5))-methyltransferase (365 aa).

Positions 189, 217, 222, 238, and 298 each coordinate S-adenosyl-L-methionine. C323 (nucleophile) is an active-site residue. The Proton acceptor role is filled by E357.

This sequence belongs to the class I-like SAM-binding methyltransferase superfamily. RNA M5U methyltransferase family. TrmA subfamily.

The catalysed reaction is uridine(54) in tRNA + S-adenosyl-L-methionine = 5-methyluridine(54) in tRNA + S-adenosyl-L-homocysteine + H(+). It catalyses the reaction uridine(341) in tmRNA + S-adenosyl-L-methionine = 5-methyluridine(341) in tmRNA + S-adenosyl-L-homocysteine + H(+). Functionally, dual-specificity methyltransferase that catalyzes the formation of 5-methyluridine at position 54 (m5U54) in all tRNAs, and that of position 341 (m5U341) in tmRNA (transfer-mRNA). This Shewanella woodyi (strain ATCC 51908 / MS32) protein is tRNA/tmRNA (uracil-C(5))-methyltransferase.